The chain runs to 393 residues: Elongation factor Tu (393 aa).

Residues 10 to 203 enclose the tr-type G domain; sequence KPHVNIGTIG…AVDEFIPEPL (194 aa). Positions 19–26 are G1; sequence GHVDHGKT. 19–26 contributes to the GTP binding site; the sequence is GHVDHGKT. Thr-26 is a binding site for Mg(2+). Residues 60-64 are G2; that stretch reads GITIS. The G3 stretch occupies residues 81 to 84; sequence DCPG. GTP contacts are provided by residues 81–85 and 136–139; these read DCPGH and NKVD. The segment at 136-139 is G4; sequence NKVD. The G5 stretch occupies residues 173–175; sequence SAL.

It belongs to the TRAFAC class translation factor GTPase superfamily. Classic translation factor GTPase family. EF-Tu/EF-1A subfamily. Monomer.

Its subcellular location is the cytoplasm. The catalysed reaction is GTP + H2O = GDP + phosphate + H(+). Functionally, GTP hydrolase that promotes the GTP-dependent binding of aminoacyl-tRNA to the A-site of ribosomes during protein biosynthesis. The chain is Elongation factor Tu from Chlorobium phaeobacteroides (strain DSM 266 / SMG 266 / 2430).